We begin with the raw amino-acid sequence, 298 residues long: Acetyl-coenzyme A carboxylase carboxyl transferase subunit beta (298 aa).

A CoA carboxyltransferase N-terminal domain is found at 25–295; that stretch reads VWAKCANCGE…SADHREHVVA (271 aa). Residues Cys29, Cys32, Cys48, and Cys51 each contribute to the Zn(2+) site. The segment at 29–51 adopts a C4-type zinc-finger fold; that stretch reads CANCGELTYQKQFNDALKVCPKC.

It belongs to the AccD/PCCB family. In terms of assembly, acetyl-CoA carboxylase is a heterohexamer composed of biotin carboxyl carrier protein (AccB), biotin carboxylase (AccC) and two subunits each of ACCase subunit alpha (AccA) and ACCase subunit beta (AccD). It depends on Zn(2+) as a cofactor.

The protein resides in the cytoplasm. It carries out the reaction N(6)-carboxybiotinyl-L-lysyl-[protein] + acetyl-CoA = N(6)-biotinyl-L-lysyl-[protein] + malonyl-CoA. It functions in the pathway lipid metabolism; malonyl-CoA biosynthesis; malonyl-CoA from acetyl-CoA: step 1/1. Component of the acetyl coenzyme A carboxylase (ACC) complex. Biotin carboxylase (BC) catalyzes the carboxylation of biotin on its carrier protein (BCCP) and then the CO(2) group is transferred by the transcarboxylase to acetyl-CoA to form malonyl-CoA. The chain is Acetyl-coenzyme A carboxylase carboxyl transferase subunit beta from Herpetosiphon aurantiacus (strain ATCC 23779 / DSM 785 / 114-95).